Here is a 433-residue protein sequence, read N- to C-terminus: Type I acyl-CoA thioesterase mpaH' (433 aa).

Residues 58-246 (HGVGLPKELY…IKALFGTTAD (189 aa)) are abhydrolase domain. Val-60 provides a ligand contact to substrate. Ser-139 acts as the Nucleophile in catalysis. Phe-140 provides a ligand contact to substrate. Residues Asp-163 and His-365 contribute to the active site.

It belongs to the AB hydrolase superfamily. MpaH hydrolase family. In terms of assembly, homodimer.

The protein resides in the peroxisome matrix. The enzyme catalyses mycophenolyl-CoA + H2O = mycophenolate + CoA + H(+). It functions in the pathway secondary metabolite biosynthesis; terpenoid biosynthesis. Its function is as follows. Type I acyl-CoA thioesterase; part of the gene cluster that mediates the biosynthesis of mycophenolic acid (MPA), the first isolated antibiotic natural product in the world obtained from a culture of Penicillium brevicompactum in 1893. MpaH' acts as a peroxisomal acyl-CoA hydrolase that converts MPA-CoA into the final product MPA. The first step of the pathway is the synthesis of 5-methylorsellinic acid (5MOA) by the cytosolic polyketide synthase mpaC. 5MOA is then converted to the phthalide compound 5,7-dihydroxy-4,6-dimethylphthalide (DHMP) by the endoplasmic reticulum-bound cytochrome P450 monooxygenase mpaDE. MpaDE first catalyzes hydroxylation of 5-MOA to 4,6-dihydroxy-2-(hydroxymethyl)-3-methylbenzoic acid (DHMB). MpaDE then acts as a lactone synthase that catalyzes the ring closure to convert DHMB into DHMP. The next step is the prenylation of DHMP by the Golgi apparatus-associated prenyltransferase mpaA to yield farnesyl-DHMP (FDHMP). The ER-bound oxygenase mpaB then mediates the oxidative cleavage the C19-C20 double bond in FDHMP to yield FDHMP-3C via a mycophenolic aldehyde intermediate. The O-methyltransferase mpaG catalyzes the methylation of FDHMP-3C to yield MFDHMP-3C. After the cytosolic methylation of FDHMP-3C, MFDHMP-3C enters into peroxisomes probably via free diffusion due to its low molecular weight. Upon a peroxisomal CoA ligation reaction, catalyzed by a beta-oxidation component enzyme acyl-CoA ligase ACL891, MFDHMP-3C-CoA would then be restricted to peroxisomes for the following beta-oxidation pathway steps. The peroxisomal beta-oxidation machinery than converts MFDHMP-3C-CoA into MPA_CoA, via a beta-oxidation chain-shortening process. Finally mpaH acts as a peroxisomal acyl-CoA hydrolase with high substrate specificity toward MPA-CoA to release the final product MPA. The chain is Type I acyl-CoA thioesterase mpaH' from Penicillium brevicompactum.